We begin with the raw amino-acid sequence, 72 residues long: SRY-related protein AES4 (72 aa).

Positions 1-69 (VKRPMNAFMV…KHMADYPDYK (69 aa)) form a DNA-binding region, HMG box.

It is found in the nucleus. The polypeptide is SRY-related protein AES4 (Alligator mississippiensis (American alligator)).